Consider the following 156-residue polypeptide: Deoxyuridine 5'-triphosphate nucleotidohydrolase (156 aa).

Substrate contacts are provided by residues 76–78 (RSG), Asn89, 93–95 (TVD), and Lys103.

The protein belongs to the dUTPase family. Mg(2+) serves as cofactor.

It catalyses the reaction dUTP + H2O = dUMP + diphosphate + H(+). It functions in the pathway pyrimidine metabolism; dUMP biosynthesis; dUMP from dCTP (dUTP route): step 2/2. Its function is as follows. This enzyme is involved in nucleotide metabolism: it produces dUMP, the immediate precursor of thymidine nucleotides and it decreases the intracellular concentration of dUTP so that uracil cannot be incorporated into DNA. This is Deoxyuridine 5'-triphosphate nucleotidohydrolase from Rhizobium etli (strain CIAT 652).